The sequence spans 264 residues: Tetraspanin-12 (264 aa).

Topologically, residues methionine 1–asparagine 13 are cytoplasmic. Residues alanine 14 to glycine 34 traverse the membrane as a helical segment. At proline 35–proline 45 the chain is on the extracellular side. A helical transmembrane segment spans residues leucine 46 to tyrosine 66. Over glycine 67 to tyrosine 75 the chain is Cytoplasmic. A helical membrane pass occupies residues leucine 76–valine 96. Over threonine 97–arginine 228 the chain is Extracellular. N-linked (GlcNAc...) asparagine glycosylation occurs at asparagine 180. A helical transmembrane segment spans residues isoleucine 229–cysteine 249. The Cytoplasmic segment spans residues cysteine 250–phenylalanine 264.

It belongs to the tetraspanin (TM4SF) family.

The protein localises to the membrane. Functionally, may be involved in the regulation of cell differentiation. This chain is Tetraspanin-12 (TET12), found in Arabidopsis thaliana (Mouse-ear cress).